A 119-amino-acid polypeptide reads, in one-letter code: Phytosulfokines 2 (119 aa).

Positions 1–34 are cleaved as a signal peptide; sequence MSTTRGVSSSSAAAALALLLLFALCFFSFHFAAA. The propeptide occupies 35-109; that stretch reads ARAVPRDEHQ…RRLLSDAHLD (75 aa). Residues Tyr110 and Tyr112 each carry the sulfotyrosine modification. Positions 115 to 119 are excised as a propeptide; sequence HKNKP.

This sequence belongs to the phytosulfokine family. In terms of processing, sulfation is important for activity and for the binding to a putative membrane receptor. PSK-alpha is produced by endopeptidase digestion. PSK-beta is produced from PSK-alpha by exopeptidase digestion.

It is found in the secreted. Promotes plant cell differentiation, organogenesis and somatic embryogenesis as well as cell proliferation. In Oryza sativa subsp. japonica (Rice), this protein is Phytosulfokines 2 (PSK2).